Consider the following 4243-residue polypeptide: Fibrocystin-L (4243 aa).

Positions 1-20 are cleaved as a signal peptide; sequence MGHLWLLGIWGLCGLLLCAA. Residues 21–4210 are Extracellular-facing; the sequence is DPSTDGSQII…KASTVGTYAQ (4190 aa). 3 IPT/TIG domains span residues 31-129, 146-255, and 270-361; these read PKVT…TCKG, PTIR…KMAY, and AEVT…ILEY. Thr-122 carries O-linked (GalNAc...) threonine glycosylation. Residues 337–492 form the PA14 domain; that stretch reads PGGRGLKLEV…NVYTEQQTGD (156 aa). The O-linked (GalNAc...) threonine glycan is linked to Thr-445. IPT/TIG domains lie at 1067–1151, 1155–1234, 1240–1322, 1330–1469, 1566–1649, 1659–1743, 1749–1828, 1831–1910, 1916–1997, 1999–2085, and 2091–2176; these read PLVL…EFYF, SQIS…AFSY, PIIT…RDKL, LEVT…SFSY, PSIS…TLSN, PNID…TFSY, PYIT…NLTV, PPVA…LFTY, PFLR…VFEY, LNIQ…PFTY, and PLIT…DFLY. O-linked (GalNAc...) threonine glycosylation is found at Thr-1803 and Thr-1839. The G8 1 domain maps to 2184-2304; it reads FSWGGKSPPE…VPVTWTRLAH (121 aa). An O-linked (GalNAc...) threonine glycan is attached at Thr-2320. PbH1 repeat units lie at residues 2508-2530, 2566-2588, 2665-2687, and 2733-2756; these read THHL…FIED, NPNN…WYRM, GGAL…ETKR, and SEGL…ALGV. In terms of domain architecture, G8 2 spans 3036-3174; it reads SFWQSSRENN…HSIYKTKLSE (139 aa). 5 PbH1 repeats span residues 3293-3315, 3355-3377, 3416-3438, 3471-3493, and 3527-3548; these read KGNA…RDST, TDGL…RIWG, GTNT…RIDG, PGCS…YFQT, and SKNV…NCSD. Residue Thr-3736 is glycosylated (O-linked (GalNAc...) threonine). The helical transmembrane segment at 4211-4231 threads the bilayer; it reads IMTVVISCLVGRMWLLEIFMA. The Cytoplasmic segment spans residues 4232-4243; that stretch reads AVSTLNITLRSY.

It is found in the membrane. Its subcellular location is the cell projection. The protein localises to the stereocilium membrane. Its function is as follows. Component of hair-cell stereocilia coat. Required for normal hearing. This chain is Fibrocystin-L (PKHD1L1), found in Homo sapiens (Human).